Here is a 362-residue protein sequence, read N- to C-terminus: Histidinol-phosphate aminotransferase (362 aa).

An N6-(pyridoxal phosphate)lysine modification is found at lysine 220.

It belongs to the class-II pyridoxal-phosphate-dependent aminotransferase family. Histidinol-phosphate aminotransferase subfamily. In terms of assembly, homodimer. The cofactor is pyridoxal 5'-phosphate.

The enzyme catalyses L-histidinol phosphate + 2-oxoglutarate = 3-(imidazol-4-yl)-2-oxopropyl phosphate + L-glutamate. It functions in the pathway amino-acid biosynthesis; L-histidine biosynthesis; L-histidine from 5-phospho-alpha-D-ribose 1-diphosphate: step 7/9. The protein is Histidinol-phosphate aminotransferase of Rhodospirillum centenum (strain ATCC 51521 / SW).